Consider the following 112-residue polypeptide: MKFVAAYLLAVLAGNASPSADDLTAILESVGCEVDNEKMELLLSQLSGKDITELIAAGREKFASVPCGGGGVAVAAAAPAAGGAAPAAEAKKEEKVEEKEESDDDMGFSLFD.

A disordered region spans residues 83 to 112 (GAAPAAEAKKEEKVEEKEESDDDMGFSLFD). The segment covering 89–98 (EAKKEEKVEE) has biased composition (basic and acidic residues).

Belongs to the eukaryotic ribosomal protein P1/P2 family. As to quaternary structure, P1 and P2 exist as dimers at the large ribosomal subunit. Post-translationally, phosphorylated.

In terms of biological role, plays an important role in the elongation step of protein synthesis. In Zea mays (Maize), this protein is Large ribosomal subunit protein P2A (RPP2A).